The chain runs to 1000 residues: C2 domain-containing protein 5 (1000 aa).

Positions 1-109 (MPGKLKVKIV…EAATVISGWF (109 aa)) constitute a C2 domain. Ca(2+) is bound by residues Asp19, Asp26, Asp76, Asp78, Ser81, and Asp84. The residue at position 197 (Ser197) is a Phosphoserine; by PKB/AKT2. A phosphoserine mark is found at Ser200 and Ser260. Positions 265-330 (MKEIPFNEDP…SGSAGKEGGP (66 aa)) are disordered. Positions 274-289 (PNPNTHSSGPSTPLKN) are enriched in polar residues. Residues 290 to 318 (QTYSFSPSKSYSRQSSSSDTDLSLTPKTG) show a composition bias toward low complexity. A phosphoserine mark is found at Ser293, Ser295, Ser304, Ser305, and Ser306. Thr317 carries the phosphothreonine modification. A compositionally biased stretch (gly residues) spans 319–328 (MGSGSAGKEG). The residue at position 323 (Ser323) is a Phosphoserine. A Phosphothreonine modification is found at Thr601. Positions 639 to 669 (EIIGSPIPEPRQRSRLLRSQSESSDEVTELD) are disordered. Ser643, Ser657, Ser659, Ser661, and Ser662 each carry phosphoserine. Thr666 bears the Phosphothreonine mark. A Phosphoserine modification is found at Ser671. Thr807 bears the Phosphothreonine mark. Residues Ser817 and Ser852 each carry the phosphoserine modification.

Requires Ca(2+) as cofactor. Phosphorylated on Ser-197 by active myristoylated kinase AKT2; insulin-stimulated phosphorylation by AKT2 regulates SLC2A4/GLUT4 translocation into the plasma membrane.

The protein localises to the cytoplasmic vesicle membrane. Its subcellular location is the cytoplasm. It localises to the cell cortex. It is found in the cell membrane. The protein resides in the cell projection. The protein localises to the ruffle. Functionally, required for insulin-stimulated glucose transport and glucose transporter SLC2A4/GLUT4 translocation from intracellular glucose storage vesicle (GSV) to the plasma membrane (PM) in adipocytes. Binds phospholipid membranes in a calcium-dependent manner and is necessary for the optimal membrane fusion between SLC2A4/GLUT4 GSV and the PM. This Pongo abelii (Sumatran orangutan) protein is C2 domain-containing protein 5 (C2CD5).